Reading from the N-terminus, the 468-residue chain is Beta-monoglucosyldiacylglycerol synthase (468 aa).

A run of 4 helical transmembrane segments spans residues 51–71 (AALV…VSWG), 72–92 (SIFI…VVFA), 361–381 (FMLT…MAVV), and 387–407 (MLGP…FAGL).

Belongs to the glycosyltransferase 2 family. Mg(2+) is required as a cofactor.

The protein resides in the membrane. It catalyses the reaction a 1,2-diacyl-sn-glycerol + UDP-alpha-D-glucose = a 1,2-diacyl-3-O-(beta-D-glucopyranosyl)-sn-glycerol + UDP + H(+). Glucosyltransferase involved in the biosynthesis of the non-bilayer-forming membrane lipid beta-monoglucosyldiacylglycerol which contributes to regulate the properties and stability of the membrane. Catalyzes the transfer of a glucosyl residue from UDP-Glc to diacylglycerol (DAG) acceptor to form the corresponding beta-glucosyl-DAG (1,2-diacyl-3-O-(beta-D-glucopyranosyl)-sn-glycerol). It can only use UDP-Glc as sugar donor. The sequence is that of Beta-monoglucosyldiacylglycerol synthase from Trichormus variabilis (strain ATCC 29413 / PCC 7937) (Anabaena variabilis).